Consider the following 197-residue polypeptide: Small ribosomal subunit protein uS5 (197 aa).

The interval 1-27 (MAEREQRGGRDQRGGGRERKEREERDS) is disordered. The 64-residue stretch at 29–92 (FVDKLVHINR…ESAKRNLTRV (64 aa)) folds into the S5 DRBM domain.

This sequence belongs to the universal ribosomal protein uS5 family. As to quaternary structure, part of the 30S ribosomal subunit. Contacts proteins S4 and S8.

Its function is as follows. With S4 and S12 plays an important role in translational accuracy. In terms of biological role, located at the back of the 30S subunit body where it stabilizes the conformation of the head with respect to the body. The polypeptide is Small ribosomal subunit protein uS5 (Bradyrhizobium diazoefficiens (strain JCM 10833 / BCRC 13528 / IAM 13628 / NBRC 14792 / USDA 110)).